Reading from the N-terminus, the 403-residue chain is 3-hydroxy-3-methylglutaryl-coenzyme A reductase (403 aa).

Residues E99 and D303 each act as charge relay system in the active site. The active-site Proton donor is the H398.

It belongs to the HMG-CoA reductase family.

It carries out the reaction (R)-mevalonate + 2 NADP(+) + CoA = (3S)-3-hydroxy-3-methylglutaryl-CoA + 2 NADPH + 2 H(+). It functions in the pathway metabolic intermediate biosynthesis; (R)-mevalonate biosynthesis; (R)-mevalonate from acetyl-CoA: step 3/3. Its activity is regulated as follows. Is competitively inhibited by (R)-HMG-CoA and lovastatin (formerly called mevinolin). Its function is as follows. Catalyzes the NADPH-dependent reductive deacylation of (S)-3-hydroxy-3-methylglutaryl-CoA (HMG-CoA) to (R)-mevalonate. Functions in the mevalonate (MVA) pathway leading to isopentenyl diphosphate (IPP), a key precursor for the biosynthesis of isoprenoid compounds such as archaeal membrane lipids. Is also able to catalyze the reduction of mevaldehyde to mevalonate and the oxidative acylation of mevaldehyde to HMG-CoA. The chain is 3-hydroxy-3-methylglutaryl-coenzyme A reductase (hmgA) from Haloferax volcanii (strain ATCC 29605 / DSM 3757 / JCM 8879 / NBRC 14742 / NCIMB 2012 / VKM B-1768 / DS2) (Halobacterium volcanii).